A 176-amino-acid polypeptide reads, in one-letter code: MQDRRSSYDYEDLLACGRGEMFGPGNAQLPLPPMLMFNRITEINDNGGEYGKGLIRAELDVTSDLWFFGCHFKGDPVMPGCLGLDAMWQMVGFFLGWTGGEGRGRALGLGELKFTGQVLPDIRKVVYNIDVKRVMRSKLVLGIADGWLSADDTIIYRAKELKVGLFKQDAAVPAGG.

H71 is a catalytic residue.

Belongs to the thioester dehydratase family. FabA subfamily. In terms of assembly, homodimer.

Its subcellular location is the cytoplasm. The enzyme catalyses a (3R)-hydroxyacyl-[ACP] = a (2E)-enoyl-[ACP] + H2O. It catalyses the reaction (3R)-hydroxydecanoyl-[ACP] = (2E)-decenoyl-[ACP] + H2O. The catalysed reaction is (2E)-decenoyl-[ACP] = (3Z)-decenoyl-[ACP]. It participates in lipid metabolism; fatty acid biosynthesis. Its function is as follows. Necessary for the introduction of cis unsaturation into fatty acids. Catalyzes the dehydration of (3R)-3-hydroxydecanoyl-ACP to E-(2)-decenoyl-ACP and then its isomerization to Z-(3)-decenoyl-ACP. Can catalyze the dehydratase reaction for beta-hydroxyacyl-ACPs with saturated chain lengths up to 16:0, being most active on intermediate chain length. This chain is 3-hydroxydecanoyl-[acyl-carrier-protein] dehydratase, found in Rhodopseudomonas palustris (strain BisA53).